A 119-amino-acid polypeptide reads, in one-letter code: uncharacterized protein (119 aa).

The helical transmembrane segment at 74-91 threads the bilayer; that stretch reads LSVHFLLNVISAILSMLI.

The protein localises to the membrane. This is an uncharacterized protein from Schizosaccharomyces pombe (strain 972 / ATCC 24843) (Fission yeast).